The chain runs to 149 residues: Large ribosomal subunit protein bL20m (149 aa).

Residues 1–9 (MVFLSLSRW) constitute a mitochondrion transit peptide.

The protein belongs to the bacterial ribosomal protein bL20 family. In terms of assembly, component of the mitochondrial ribosome large subunit (39S) which comprises a 16S rRNA and about 50 distinct proteins.

It is found in the mitochondrion. The protein is Large ribosomal subunit protein bL20m (mrpl20) of Xenopus laevis (African clawed frog).